The sequence spans 536 residues: Inactive beta-amylase 9 (536 aa).

Ser47 bears the Phosphoserine mark. The tract at residues 511–536 (QASEAEVEAETASIGSGTGAPSLQTA) is disordered.

It belongs to the glycosyl hydrolase 14 family. Mostly expressed in young floral buds, flowers and roots, and, to a later extent, in stems and leaves.

It localises to the cytoplasm. This is Inactive beta-amylase 9 (BAM9) from Arabidopsis thaliana (Mouse-ear cress).